A 181-amino-acid chain; its full sequence is Large ribosomal subunit protein uL10 (181 aa).

It belongs to the universal ribosomal protein uL10 family. In terms of assembly, part of the ribosomal stalk of the 50S ribosomal subunit. The N-terminus interacts with L11 and the large rRNA to form the base of the stalk. The C-terminus forms an elongated spine to which L12 dimers bind in a sequential fashion forming a multimeric L10(L12)X complex.

In terms of biological role, forms part of the ribosomal stalk, playing a central role in the interaction of the ribosome with GTP-bound translation factors. In Amoebophilus asiaticus (strain 5a2), this protein is Large ribosomal subunit protein uL10.